The following is an 821-amino-acid chain: Tip elongation aberrant protein Tea4 (821 aa).

Polar residues-rich tracts occupy residues 1–11 (MLHMNSASSAD) and 21–31 (DPTQQNDSTII). Positions 1–36 (MLHMNSASSADSMEIMESHFDPTQQNDSTIIESRYS) are disordered. The residue at position 35 (Tyr35) is a Phosphotyrosine. Ser36 carries the post-translational modification Phosphoserine. A Phosphotyrosine modification is found at Tyr40. Residues 51–79 (ISGENSEPQTVASQEISDSQEEDTTLTSS) form a disordered region. A compositionally biased stretch (polar residues) spans 53–67 (GENSEPQTVASQEIS). Residues 130–191 (IDCNFVHAIR…PAEYIETPSE (62 aa)) form the SH3 domain. 5 disordered regions span residues 267 to 292 (LEIE…DHVT), 333 to 352 (SSTT…FSSA), 473 to 500 (DSFD…MPNN), 529 to 570 (SPRL…SSLL), and 664 to 697 (DASS…SFSS). Over residues 268–282 (EIEFSDSSDSSLSAE) the composition is skewed to low complexity. Basic and acidic residues predominate over residues 283–292 (YRSESEDHVT). 2 stretches are compositionally biased toward polar residues: residues 333 to 350 (SSTT…SKFS) and 473 to 484 (DSFDTSNVTQDA). The interval 527–821 (LLSPRLYSSS…EMASLLNTNR (295 aa)) is interaction with tea1. The span at 529 to 541 (SPRLYSSSTPSSP) shows a compositional bias: low complexity. A compositionally biased stretch (basic and acidic residues) spans 554–563 (ENRKQADKVE). Residues 599 to 821 (KAFSQSSIDL…EMASLLNTNR (223 aa)) form an interaction with win1 region. Residues 665–674 (ASSAIPSSSI) are compositionally biased toward low complexity. Basic and acidic residues predominate over residues 675–687 (SHDEDLLPRKNTE).

In terms of assembly, an essential component of the tea1 cell-end complex. Interacts with win1, tea1 and for3. Interacts with tip1 in the presence of tea1.

It localises to the cytoplasm. The protein resides in the cytoskeleton. Its function is as follows. Cell polarity factor essential for the bipolar localization and function of structures containing the cell-end marker tea1 during the normal cell cycle. Regulates cell polarity in complex with tea1 and together with the stress signaling MAPK cascade, contributes to cell polarity maintenance under stress conditions. Required for the localization of for3 at the cell tip specifically during initiation of bipolar growth. During the new end take off (NETO), formation of a protein complex that includes tea1, tea4 and for3 is necessary and sufficient for the establishment of cell polarity and localized actin assembly at new cell ends. This is Tip elongation aberrant protein Tea4 from Schizosaccharomyces pombe (strain 972 / ATCC 24843) (Fission yeast).